Consider the following 363-residue polypeptide: Actin-related protein 7 (363 aa).

Met1 bears the N-acetylmethionine mark.

This sequence belongs to the actin family. Plant ARP7 subfamily. As to expression, mostly expressed in flowers, and, to a lower extent, in roots, seedlings, leaves and siliques (at protein level).

The protein resides in the nucleus. Its subcellular location is the cytoplasm. Essential protein required during embryogenesis and all plant development stages, probably through a chromatin-mediated regulation of gene expression. The polypeptide is Actin-related protein 7 (ARP7) (Arabidopsis thaliana (Mouse-ear cress)).